A 210-amino-acid polypeptide reads, in one-letter code: uncharacterized protein (210 aa).

5 positions are modified to phosphoserine: serine 18, serine 39, serine 41, serine 57, and serine 60. Polar residues predominate over residues 33 to 46 (LDLDQRSMSPSNIA). The tract at residues 33–58 (LDLDQRSMSPSNIASGEDRITRTNSG) is disordered. Disordered regions lie at residues 100–139 (YDHNNGTKSPTPKTSNMVDPKNKKKNKKKKNDKDDKYKVS) and 177–210 (DSAPLDNANYPLSDHSPSLNSMDNTTKHSSNVHT). The span at 102–116 (HNNGTKSPTPKTSNM) shows a compositional bias: polar residues. Over residues 130–139 (NDKDDKYKVS) the composition is skewed to basic and acidic residues. Residues serine 178, serine 189, and serine 192 each carry the phosphoserine modification. Residues 191 to 210 (HSPSLNSMDNTTKHSSNVHT) are compositionally biased toward polar residues.

This is an uncharacterized protein from Saccharomyces cerevisiae (strain ATCC 204508 / S288c) (Baker's yeast).